The chain runs to 651 residues: DNA mismatch repair protein MutL (651 aa).

The segment at 336 to 398 (RLDMTEPETG…ANSGYQPENP (63 aa)) is disordered. A compositionally biased stretch (polar residues) spans 385-394 (ARESANSGYQ).

Belongs to the DNA mismatch repair MutL/HexB family.

In terms of biological role, this protein is involved in the repair of mismatches in DNA. It is required for dam-dependent methyl-directed DNA mismatch repair. May act as a 'molecular matchmaker', a protein that promotes the formation of a stable complex between two or more DNA-binding proteins in an ATP-dependent manner without itself being part of a final effector complex. The protein is DNA mismatch repair protein MutL of Pectobacterium atrosepticum (strain SCRI 1043 / ATCC BAA-672) (Erwinia carotovora subsp. atroseptica).